Reading from the N-terminus, the 308-residue chain is GTP cyclohydrolase FolE2 (308 aa).

The protein belongs to the GTP cyclohydrolase IV family.

It carries out the reaction GTP + H2O = 7,8-dihydroneopterin 3'-triphosphate + formate + H(+). The protein operates within cofactor biosynthesis; 7,8-dihydroneopterin triphosphate biosynthesis; 7,8-dihydroneopterin triphosphate from GTP: step 1/1. Functionally, converts GTP to 7,8-dihydroneopterin triphosphate. The chain is GTP cyclohydrolase FolE2 from Colwellia psychrerythraea (strain 34H / ATCC BAA-681) (Vibrio psychroerythus).